The sequence spans 566 residues: MDLHRAAFKMENSSYLPNPLASPALMVLASTAEASRDASIPCQQPRPFGVPVSVDKDVHIPFTNGSYTFASMYHRQGGVPGTFANRDFPPSLLHLHPQFAPPNLDCTPISMLNHSGVGAFRPFASTEDRESYQSAFTPAKRLKNCHDTESPHLRFSDADGKEYDFGTQLPSSSPGSLKVDDTGKKIFAVSGLISDRETSSSPEDRNDRCKKKAVALFDSQAPLCPICQVLLRPSELQEHMEQELEQLAQLPASKNSLLKDAMAPGTPKSLLLSASIKREGDSPTASPHSSATEDLHHSDRYQTFLRVRANRQTRLNARIGKMKRRKQDEGQREGSCMAEDDAVDIEHADSNRFEEYEWCGQKRIRATTLLEGGFRGSGFVMCSGKENPDSDADLDVDGDDTLEYGKPQYTEADVIPCTGEEPGEAKEREALRGAVLNGGPPSTRITPEFSKWASDEMPSTSNGEGSKQEAMQKTCKNSDIEKITEESAVTTFEALKARVRELERQLSRGDRYKCLICMDSYSMPLTSIQCWHVHCEECWLRTLGAKKLCPQCNTITAPGDLRRIYL.

Lysine 277 is covalently cross-linked (Glycyl lysine isopeptide (Lys-Gly) (interchain with G-Cter in SUMO2)). A disordered region spans residues 277 to 300 (KREGDSPTASPHSSATEDLHHSDR). The segment covering 291–300 (ATEDLHHSDR) has biased composition (basic and acidic residues). Phosphoserine is present on serine 390. Positions 485-513 (EESAVTTFEALKARVRELERQLSRGDRYK) form a coiled coil. Positions 514-522 (CLICMDSYS) are required for targeting to the cytoplasm. The segment at 514 to 553 (CLICMDSYSMPLTSIQCWHVHCEECWLRTLGAKKLCPQCN) adopts an RING-type zinc-finger fold.

As to quaternary structure, interacts with SIN3B. Interacts with CTNNB1 (via Armadillo repeats 2-8). Interacts with USP7 (via MATH domain). In terms of processing, auto-ubiquitinated; leads to proteasomal degradation. In the brain, expressed in the hippocampus, telenecephalon and cerebellum. No expression in astro glial cells or in neural progenitor cells.

The protein resides in the cytoplasm. The protein localises to the nucleus. It catalyses the reaction S-ubiquitinyl-[E2 ubiquitin-conjugating enzyme]-L-cysteine + [acceptor protein]-L-lysine = [E2 ubiquitin-conjugating enzyme]-L-cysteine + N(6)-ubiquitinyl-[acceptor protein]-L-lysine.. The protein operates within protein modification; protein ubiquitination. E3 ubiquitin-protein ligase that promotes the ubiquitination and proteasomal degradation of SIN3B. Independently of its E3 ligase activity, acts as a CTNNB1 stabilizer through USP7-mediated deubiquitination of CTNNB1 and promotes Wnt signaling. Plays a critical role in the regulation of nuclear lamina. The sequence is that of E3 ubiquitin-protein ligase Rnf220 (Rnf220) from Mus musculus (Mouse).